The primary structure comprises 170 residues: Large ribosomal subunit protein uL10 (170 aa).

The protein belongs to the universal ribosomal protein uL10 family. Part of the ribosomal stalk of the 50S ribosomal subunit. The N-terminus interacts with L11 and the large rRNA to form the base of the stalk. The C-terminus forms an elongated spine to which L12 dimers bind in a sequential fashion forming a multimeric L10(L12)X complex.

Its function is as follows. Forms part of the ribosomal stalk, playing a central role in the interaction of the ribosome with GTP-bound translation factors. The sequence is that of Large ribosomal subunit protein uL10 from Fusobacterium nucleatum subsp. nucleatum (strain ATCC 25586 / DSM 15643 / BCRC 10681 / CIP 101130 / JCM 8532 / KCTC 2640 / LMG 13131 / VPI 4355).